The following is a 506-amino-acid chain: Maturase K (506 aa).

This sequence belongs to the intron maturase 2 family. MatK subfamily.

It is found in the plastid. It localises to the chloroplast. Its function is as follows. Usually encoded in the trnK tRNA gene intron. Probably assists in splicing its own and other chloroplast group II introns. This Lathyrus aphaca (Yellow vetchling) protein is Maturase K.